The primary structure comprises 81 residues: Short neurotoxin 2 (81 aa).

The first 21 residues, 1-21, serve as a signal peptide directing secretion; the sequence is MKTLLLTLVVVTIVCLDLGYT. 4 disulfides stabilise this stretch: Cys24-Cys43, Cys38-Cys60, Cys62-Cys73, and Cys74-Cys79.

This sequence belongs to the three-finger toxin family. Short-chain subfamily. Type I alpha-neurotoxin sub-subfamily. Expressed by the venom gland.

It is found in the secreted. Functionally, binds to muscle nicotinic acetylcholine receptor (nAChR) and inhibit acetylcholine from binding to the receptor, thereby impairing neuromuscular transmission. This Hydrophis hardwickii (Hardwick's spine-bellied seasnake) protein is Short neurotoxin 2.